A 518-amino-acid chain; its full sequence is 12S seed storage globulin 2 (518 aa).

The N-terminal stretch at 1–24 (MATTRFPSLLFYSYIFLLCNGSMA) is a signal peptide. Intrachain disulfides connect Cys45-Cys78 and Cys121-Cys324. The region spanning 50–240 (LQAFEPLRQV…ALGISQQVAQ (191 aa)) is the Cupin type-1 1 domain. A disordered region spans residues 280 to 311 (IQSQEEQSTQYQVGQSPQYQEGQSTQYQPGQS). The Cupin type-1 2 domain occupies 330-479 (QNIENPKRAD…AYRISRQEAQ (150 aa)). Residues 482–518 (KNNRGEEFDAFTPKFTQTGSQSYQDEGESSSTEKASE) form a disordered region. The segment covering 495 to 518 (KFTQTGSQSYQDEGESSSTEKASE) has biased composition (polar residues).

The protein belongs to the 11S seed storage protein (globulins) family. Hexamer; each subunit is composed of an acidic and a basic chain derived from a single precursor and linked by a disulfide bond.

Its function is as follows. This is a seed storage protein. The polypeptide is 12S seed storage globulin 2 (Avena sativa (Oat)).